Consider the following 145-residue polypeptide: Basic phospholipase A2 cPt09 (145 aa).

The first 21 residues, Met-1–Thr-21, serve as a signal peptide directing secretion. A propeptide spanning residues Ile-22–Leu-27 is cleaved from the precursor. Intrachain disulfides connect Cys-38-Cys-98, Cys-54-Cys-144, Cys-56-Cys-72, Cys-71-Cys-125, Cys-78-Cys-118, Cys-87-Cys-111, and Cys-105-Cys-116. Ca(2+) is bound by residues Tyr-55, Gly-57, and Gly-59. The active site involves His-75. Residue Asp-76 coordinates Ca(2+). Asp-119 is an active-site residue.

The protein belongs to the phospholipase A2 family. Group I subfamily. D49 sub-subfamily. The cofactor is Ca(2+). Expressed by the venom gland.

Its subcellular location is the secreted. It catalyses the reaction a 1,2-diacyl-sn-glycero-3-phosphocholine + H2O = a 1-acyl-sn-glycero-3-phosphocholine + a fatty acid + H(+). In terms of biological role, PLA2 catalyzes the calcium-dependent hydrolysis of the 2-acyl groups in 3-sn-phosphoglycerides. The sequence is that of Basic phospholipase A2 cPt09 from Laticauda semifasciata (Black-banded sea krait).